The chain runs to 399 residues: Putative 3'-5' exonuclease R431 (399 aa).

Positions 118-297 (FQIVDNWIEN…IYNELQLMTN (180 aa)) constitute a 3'-5' exonuclease domain. The R3H domain maps to 335–399 (ERRLKSIESK…NKYVIITRHC (65 aa)).

The polypeptide is Putative 3'-5' exonuclease R431 (Acanthamoeba polyphaga (Amoeba)).